Reading from the N-terminus, the 940-residue chain is Isoleucine--tRNA ligase (940 aa).

The 'HIGH' region signature appears at 58-68 (PYANGSIHIGH). Glutamate 564 lines the L-isoleucyl-5'-AMP pocket. A 'KMSKS' region motif is present at residues 605-609 (KMSKS). Position 608 (lysine 608) interacts with ATP. The Zn(2+) site is built by cysteine 903, cysteine 906, cysteine 923, and cysteine 926.

It belongs to the class-I aminoacyl-tRNA synthetase family. IleS type 1 subfamily. In terms of assembly, monomer. Zn(2+) is required as a cofactor.

It localises to the cytoplasm. The enzyme catalyses tRNA(Ile) + L-isoleucine + ATP = L-isoleucyl-tRNA(Ile) + AMP + diphosphate. Functionally, catalyzes the attachment of isoleucine to tRNA(Ile). As IleRS can inadvertently accommodate and process structurally similar amino acids such as valine, to avoid such errors it has two additional distinct tRNA(Ile)-dependent editing activities. One activity is designated as 'pretransfer' editing and involves the hydrolysis of activated Val-AMP. The other activity is designated 'posttransfer' editing and involves deacylation of mischarged Val-tRNA(Ile). The sequence is that of Isoleucine--tRNA ligase from Shewanella woodyi (strain ATCC 51908 / MS32).